Here is a 185-residue protein sequence, read N- to C-terminus: Large ribosomal subunit protein uL5 (185 aa).

It belongs to the universal ribosomal protein uL5 family. Part of the 50S ribosomal subunit; part of the 5S rRNA/L5/L18/L25 subcomplex. Contacts the 5S rRNA and the P site tRNA. Forms a bridge to the 30S subunit in the 70S ribosome.

Its function is as follows. This is one of the proteins that bind and probably mediate the attachment of the 5S RNA into the large ribosomal subunit, where it forms part of the central protuberance. In the 70S ribosome it contacts protein S13 of the 30S subunit (bridge B1b), connecting the 2 subunits; this bridge is implicated in subunit movement. Contacts the P site tRNA; the 5S rRNA and some of its associated proteins might help stabilize positioning of ribosome-bound tRNAs. In Rhizobium etli (strain ATCC 51251 / DSM 11541 / JCM 21823 / NBRC 15573 / CFN 42), this protein is Large ribosomal subunit protein uL5.